Here is an 892-residue protein sequence, read N- to C-terminus: Polyribonucleotide nucleotidyltransferase (892 aa).

The disordered stretch occupies residues 407-427 (YMHNYEMPPYSTGETGRVGSP). D521 and D527 together coordinate Mg(2+). A KH domain is found at 587 to 646 (PRIITTTVPVDKIGEVIGPKGKMINQIQEDTGAEIAIEDDGTVYISSEGGEAAEKAKEII). The S1 motif domain maps to 658–730 (GETYNGKVVK…DRGKISLAIP (73 aa)). The interval 727–892 (LAIPGFEDQE…VRRDFDPFED (166 aa)) is disordered. Basic and acidic residues-rich tracts occupy residues 739-844 (APRR…DRRS) and 851-877 (RRDD…ERSE).

It belongs to the polyribonucleotide nucleotidyltransferase family. Mg(2+) is required as a cofactor.

The protein localises to the cytoplasm. The catalysed reaction is RNA(n+1) + phosphate = RNA(n) + a ribonucleoside 5'-diphosphate. Its function is as follows. Involved in mRNA degradation. Catalyzes the phosphorolysis of single-stranded polyribonucleotides processively in the 3'- to 5'-direction. This is Polyribonucleotide nucleotidyltransferase from Bifidobacterium adolescentis (strain ATCC 15703 / DSM 20083 / NCTC 11814 / E194a).